A 307-amino-acid chain; its full sequence is Pantothenate kinase (307 aa).

87 to 94 (GSVAVGKS) lines the ATP pocket.

It belongs to the prokaryotic pantothenate kinase family.

It localises to the cytoplasm. The catalysed reaction is (R)-pantothenate + ATP = (R)-4'-phosphopantothenate + ADP + H(+). It participates in cofactor biosynthesis; coenzyme A biosynthesis; CoA from (R)-pantothenate: step 1/5. The polypeptide is Pantothenate kinase (Vibrio vulnificus (strain CMCP6)).